Consider the following 185-residue polypeptide: Ribosome-recycling factor (185 aa).

This sequence belongs to the RRF family.

The protein localises to the cytoplasm. Responsible for the release of ribosomes from messenger RNA at the termination of protein biosynthesis. May increase the efficiency of translation by recycling ribosomes from one round of translation to another. This Saccharopolyspora erythraea (strain ATCC 11635 / DSM 40517 / JCM 4748 / NBRC 13426 / NCIMB 8594 / NRRL 2338) protein is Ribosome-recycling factor.